The chain runs to 614 residues: ETS-related transcription factor Elf-1 (614 aa).

Phosphoserine is present on residues S110, S163, S167, and S168. Residues 159-199 (TYAHSPGPSSPEQPKRKKGRKTKPPRPDSPTTTPNISVKKK) form a disordered region. Over residues 173-182 (KRKKGRKTKP) the composition is skewed to basic residues. S187 carries the phosphoserine modification. T190 is subject to Phosphothreonine. Positions 208-290 (IYLWEFLLAL…EGQRLVYQFK (83 aa)) form a DNA-binding region, ETS. The interval 303–371 (DPSCSIESSD…VQPSEALRTV (69 aa)) is disordered. The segment covering 310–335 (SSDPSLSSTATSSRNPASRSRASSSP) has biased composition (low complexity). S430 is subject to Phosphoserine.

Belongs to the ETS family. Binds to the underphosphorylated form of RB. May interact with other transcription factors in order to regulate specific genes. Interacts with RUNX1.

It localises to the nucleus. Transcription factor that activates the LYN and BLK promoters. The protein is ETS-related transcription factor Elf-1 (ELF1) of Bos taurus (Bovine).